Reading from the N-terminus, the 71-residue chain is AKMSLSSYILILTLVLFSQGILLSASKSIRNLEDDMVFNTFRLGKAFQKEDTAEKSVVAPSLEQYKNDENS.

The signal sequence occupies residues 1–20 (AKMSLSSYILILTLVLFSQG).

This sequence belongs to the melanin-concentrating hormone family.

The protein resides in the secreted. This chain is Pro-MCH (PMCH), found in Carlito syrichta (Philippine tarsier).